Consider the following 557-residue polypeptide: Venom carboxylesterase-6 (557 aa).

Positions 1 to 21 (MYMLKLSYILLFLGFVKFSWQ) are cleaved as a signal peptide. A disulfide bridge links cysteine 88 with cysteine 108. Asparagine 145 carries N-linked (GlcNAc...) asparagine glycosylation. Residue serine 212 is the Acyl-ester intermediate of the active site. An intrachain disulfide couples cysteine 264 to cysteine 275. Glutamate 341 acts as the Charge relay system in catalysis. Asparagine 374 carries an N-linked (GlcNAc...) asparagine glycan. Histidine 464 serves as the catalytic Charge relay system. 3 N-linked (GlcNAc...) asparagine glycosylation sites follow: asparagine 478, asparagine 528, and asparagine 542.

This sequence belongs to the type-B carboxylesterase/lipase family. As to expression, expressed by the venom gland.

The protein localises to the secreted. It catalyses the reaction a carboxylic ester + H2O = an alcohol + a carboxylate + H(+). The chain is Venom carboxylesterase-6 from Apis mellifera (Honeybee).